The following is a 358-amino-acid chain: Membrane-bound lytic murein transglycosylase C (358 aa).

A signal peptide spans 1–19 (MKITLKKLLILAIVPFLYA). Cysteine 20 is lipidated: N-palmitoyl cysteine. Cysteine 20 is lipidated: S-diacylglycerol cysteine.

The protein belongs to the transglycosylase Slt family.

The protein localises to the cell outer membrane. It carries out the reaction Exolytic cleavage of the (1-&gt;4)-beta-glycosidic linkage between N-acetylmuramic acid (MurNAc) and N-acetylglucosamine (GlcNAc) residues in peptidoglycan, from either the reducing or the non-reducing ends of the peptidoglycan chains, with concomitant formation of a 1,6-anhydrobond in the MurNAc residue.. In terms of biological role, murein-degrading enzyme. May play a role in recycling of muropeptides during cell elongation and/or cell division. The sequence is that of Membrane-bound lytic murein transglycosylase C from Actinobacillus succinogenes (strain ATCC 55618 / DSM 22257 / CCUG 43843 / 130Z).